The primary structure comprises 162 residues: UPF0763 protein Sdel_0383 (162 aa).

This sequence belongs to the UPF0763 family.

This chain is UPF0763 protein Sdel_0383, found in Sulfurospirillum deleyianum (strain ATCC 51133 / DSM 6946 / 5175).